The following is a 143-amino-acid chain: MINDIKWVQAQRKATDWRQAVEIATRPLVAYGAAQPCYVNGIIENTLNWGPYYLIAPGIALPHARPEQGANYNQVSITTLRTPVAFGNEECDPVWLLLCVSATDANAHILTIQRISQFIDSPQRLTAVGNASTDDALFALVSG.

The PTS EIIA type-2 domain maps to 1 to 143 (MINDIKWVQA…DDALFALVSG (143 aa)). Catalysis depends on His-63, which acts as the Tele-phosphohistidine intermediate.

It localises to the cytoplasm. Its function is as follows. The phosphoenolpyruvate-dependent sugar phosphotransferase system (sugar PTS), a major carbohydrate active -transport system, catalyzes the phosphorylation of incoming sugar substrates concomitantly with their translocation across the cell membrane. In Escherichia coli (strain K12), this protein is Putative phosphotransferase IIA component SgcA (sgcA).